Consider the following 444-residue polypeptide: Viral protein kinase (444 aa).

The disordered stretch occupies residues 1–25; the sequence is MRWKRMERRPPLTPLRRSRTQSSGG. Residues 90-98 and lysine 108 contribute to the ATP site; that span reads LGRGAFGII. The active-site Proton acceptor is aspartate 201.

In terms of assembly, interacts with protein K-bZIP/K8. Interacts with host beta-catenin/CTNNB1. In terms of processing, AUtophosphorylated.

It is found in the host nucleus. The catalysed reaction is L-seryl-[protein] + ATP = O-phospho-L-seryl-[protein] + ADP + H(+). It carries out the reaction L-threonyl-[protein] + ATP = O-phospho-L-threonyl-[protein] + ADP + H(+). Serine/threonine protein kinase that plays a role in viral gene expression, viral DNA replication and encapsidation, and nuclear egress of virions. Regulates host transcriptional activity through interactions with RNA helicase and c-Jun N-terminal kinase (JNK) and viral transcriptional activity through interactions with the viral protein K-bZIP/K8. Induces host chromosome condensation and phosphorylation of histone H3. Phosphorylates the DNA polymerase processivity factor hence modulating its processivity function. Inhibits the host Wnt signaling pathway via direct interactions with beta-catenin/CTNNB1 while the kinase activity of vPK is not required for this inhibitory activity. Also phosphorylates host SAMHD1 and thereby counteracts its antiviral effect by reducing its dNTP hydrolase activity. This is Viral protein kinase (vPK) from Human herpesvirus 8 type P (isolate GK18) (HHV-8).